A 352-amino-acid chain; its full sequence is N-acetyl-gamma-glutamyl-phosphate reductase (352 aa).

Cys155 is a catalytic residue.

Belongs to the NAGSA dehydrogenase family. Type 1 subfamily.

It is found in the cytoplasm. It catalyses the reaction N-acetyl-L-glutamate 5-semialdehyde + phosphate + NADP(+) = N-acetyl-L-glutamyl 5-phosphate + NADPH + H(+). Its pathway is amino-acid biosynthesis; L-arginine biosynthesis; N(2)-acetyl-L-ornithine from L-glutamate: step 3/4. In terms of biological role, catalyzes the NADPH-dependent reduction of N-acetyl-5-glutamyl phosphate to yield N-acetyl-L-glutamate 5-semialdehyde. This is N-acetyl-gamma-glutamyl-phosphate reductase from Synechococcus elongatus (strain ATCC 33912 / PCC 7942 / FACHB-805) (Anacystis nidulans R2).